A 448-amino-acid chain; its full sequence is Probable glycine dehydrogenase (decarboxylating) subunit 1 (448 aa).

It belongs to the GcvP family. N-terminal subunit subfamily. The glycine cleavage system is composed of four proteins: P, T, L and H. In this organism, the P 'protein' is a heterodimer of two subunits.

The enzyme catalyses N(6)-[(R)-lipoyl]-L-lysyl-[glycine-cleavage complex H protein] + glycine + H(+) = N(6)-[(R)-S(8)-aminomethyldihydrolipoyl]-L-lysyl-[glycine-cleavage complex H protein] + CO2. In terms of biological role, the glycine cleavage system catalyzes the degradation of glycine. The P protein binds the alpha-amino group of glycine through its pyridoxal phosphate cofactor; CO(2) is released and the remaining methylamine moiety is then transferred to the lipoamide cofactor of the H protein. The chain is Probable glycine dehydrogenase (decarboxylating) subunit 1 from Bacillus licheniformis (strain ATCC 14580 / DSM 13 / JCM 2505 / CCUG 7422 / NBRC 12200 / NCIMB 9375 / NCTC 10341 / NRRL NRS-1264 / Gibson 46).